The following is a 448-amino-acid chain: U-box domain-containing protein 30 (448 aa).

The 75-residue stretch at 63-137 (DIPSVFICPI…YTWFSQKYVL (75 aa)) folds into the U-box domain. ARM repeat units lie at residues 179–219 (LMAR…SLDL) and 221–260 (SDSK…GLVE).

The enzyme catalyses S-ubiquitinyl-[E2 ubiquitin-conjugating enzyme]-L-cysteine + [acceptor protein]-L-lysine = [E2 ubiquitin-conjugating enzyme]-L-cysteine + N(6)-ubiquitinyl-[acceptor protein]-L-lysine.. The protein operates within protein modification; protein ubiquitination. Functions as an E3 ubiquitin ligase. The sequence is that of U-box domain-containing protein 30 (PUB30) from Arabidopsis thaliana (Mouse-ear cress).